We begin with the raw amino-acid sequence, 323 residues long: tRNA U34 carboxymethyltransferase (323 aa).

Carboxy-S-adenosyl-L-methionine is bound by residues Lys-91, Trp-105, Lys-110, Gly-130, 152 to 154, 181 to 182, Met-196, Tyr-200, and Arg-315; these read DPT and IE.

This sequence belongs to the class I-like SAM-binding methyltransferase superfamily. CmoB family. In terms of assembly, homotetramer.

The enzyme catalyses carboxy-S-adenosyl-L-methionine + 5-hydroxyuridine(34) in tRNA = 5-carboxymethoxyuridine(34) in tRNA + S-adenosyl-L-homocysteine + H(+). Its function is as follows. Catalyzes carboxymethyl transfer from carboxy-S-adenosyl-L-methionine (Cx-SAM) to 5-hydroxyuridine (ho5U) to form 5-carboxymethoxyuridine (cmo5U) at position 34 in tRNAs. In Escherichia coli O7:K1 (strain IAI39 / ExPEC), this protein is tRNA U34 carboxymethyltransferase.